The following is a 238-amino-acid chain: Flagellar L-ring protein (238 aa).

An N-terminal signal peptide occupies residues 1-17 (MIRKTLAASCAVLLMAG). A lipid anchor (N-palmitoyl cysteine) is attached at C18. A lipid anchor (S-diacylglycerol cysteine) is attached at C18.

It belongs to the FlgH family. In terms of assembly, the basal body constitutes a major portion of the flagellar organelle and consists of four rings (L,P,S, and M) mounted on a central rod.

The protein resides in the cell outer membrane. The protein localises to the bacterial flagellum basal body. In terms of biological role, assembles around the rod to form the L-ring and probably protects the motor/basal body from shearing forces during rotation. The chain is Flagellar L-ring protein from Nitratidesulfovibrio vulgaris (strain ATCC 29579 / DSM 644 / CCUG 34227 / NCIMB 8303 / VKM B-1760 / Hildenborough) (Desulfovibrio vulgaris).